We begin with the raw amino-acid sequence, 193 residues long: Pyridoxal 5'-phosphate synthase subunit PdxT (193 aa).

50–52 serves as a coordination point for L-glutamine; the sequence is GES. Cysteine 82 (nucleophile) is an active-site residue. Residues arginine 109 and 136–137 contribute to the L-glutamine site; that span reads IR. Active-site charge relay system residues include histidine 172 and glutamate 174.

This sequence belongs to the glutaminase PdxT/SNO family. In terms of assembly, in the presence of PdxS, forms a dodecamer of heterodimers. Only shows activity in the heterodimer.

The enzyme catalyses aldehydo-D-ribose 5-phosphate + D-glyceraldehyde 3-phosphate + L-glutamine = pyridoxal 5'-phosphate + L-glutamate + phosphate + 3 H2O + H(+). The catalysed reaction is L-glutamine + H2O = L-glutamate + NH4(+). It functions in the pathway cofactor biosynthesis; pyridoxal 5'-phosphate biosynthesis. Its function is as follows. Catalyzes the hydrolysis of glutamine to glutamate and ammonia as part of the biosynthesis of pyridoxal 5'-phosphate. The resulting ammonia molecule is channeled to the active site of PdxS. This is Pyridoxal 5'-phosphate synthase subunit PdxT from Streptococcus pneumoniae serotype 19F (strain G54).